A 311-amino-acid chain; its full sequence is Beta-lactamase (311 aa).

A signal peptide (tat-type signal) is located at residues 1–36 (MRKPTSSLTRRSVLGAGLGLGGALALGSTTASAASA). Ser-86 functions as the Acyl-ester intermediate in the catalytic mechanism. 252 to 254 (KSG) is a binding site for substrate.

The protein belongs to the class-A beta-lactamase family. In terms of processing, predicted to be exported by the Tat system. The position of the signal peptide cleavage has not been experimentally proven.

It catalyses the reaction a beta-lactam + H2O = a substituted beta-amino acid. In terms of biological role, hydrolyzes benzylpenicillin and cloxacillin (at 10% of the rate of benzylpenicillin). The sequence is that of Beta-lactamase (bla) from Streptomyces cellulosae.